A 130-amino-acid polypeptide reads, in one-letter code: Small ribosomal subunit protein uS9 (130 aa).

The tract at residues 105 to 130 is disordered; it reads TRDPRMKERKKYGLKGARRAPQFSKR. Positions 111 to 130 are enriched in basic residues; that stretch reads KERKKYGLKGARRAPQFSKR.

Belongs to the universal ribosomal protein uS9 family.

The polypeptide is Small ribosomal subunit protein uS9 (Bacillus pumilus (strain SAFR-032)).